We begin with the raw amino-acid sequence, 339 residues long: Dihydroorotate dehydrogenase (quinone) (339 aa).

FMN-binding positions include 64-68 and T88; that span reads AGADK. K68 provides a ligand contact to substrate. 113–117 is a binding site for substrate; that stretch reads NRNGF. Residues N141 and N174 each coordinate FMN. N174 is a substrate binding site. The active-site Nucleophile is the S177. Substrate is bound at residue N179. Residues K219 and T247 each coordinate FMN. 248–249 lines the substrate pocket; it reads NT. FMN-binding positions include G270, G299, and 320-321; that span reads YS.

It belongs to the dihydroorotate dehydrogenase family. Type 2 subfamily. As to quaternary structure, monomer. FMN is required as a cofactor.

It localises to the cell membrane. The catalysed reaction is (S)-dihydroorotate + a quinone = orotate + a quinol. It participates in pyrimidine metabolism; UMP biosynthesis via de novo pathway; orotate from (S)-dihydroorotate (quinone route): step 1/1. Its function is as follows. Catalyzes the conversion of dihydroorotate to orotate with quinone as electron acceptor. The chain is Dihydroorotate dehydrogenase (quinone) from Haemophilus influenzae (strain PittGG).